A 550-amino-acid polypeptide reads, in one-letter code: Hydroxylamine reductase (550 aa).

4 residues coordinate [2Fe-2S] cluster: C3, C6, C18, and C25. Hybrid [4Fe-2O-2S] cluster contacts are provided by H249, E273, C317, C405, C433, C458, E492, and K494. C405 carries the post-translational modification Cysteine persulfide.

It belongs to the HCP family. The cofactor is [2Fe-2S] cluster. It depends on hybrid [4Fe-2O-2S] cluster as a cofactor.

Its subcellular location is the cytoplasm. The catalysed reaction is A + NH4(+) + H2O = hydroxylamine + AH2 + H(+). Its function is as follows. Catalyzes the reduction of hydroxylamine to form NH(3) and H(2)O. The sequence is that of Hydroxylamine reductase from Escherichia coli O6:K15:H31 (strain 536 / UPEC).